Reading from the N-terminus, the 282-residue chain is MLDLLLEPFSYDYMLKAMILSTAVGGICAFLSSYLMLKGWSLIGDALSHSVVPGVAIAYAFALPYALGAFFAGILAALSILWIKSISKLKEDAVIGFIFSTFFALGLLIVSLNPTAVNVQNIILGNILGIADEDIYQVAIIIGVCLVLLLLFWKDLLLIFFDETQAITVGLSPLFYKILFFTLLSACVVAALQTVGAILVIAMVVTPGATAYLLTDKFKTLSIIAIILGAVTSFVGVYISYYLDGATGGVIVTLQTLLFLVAFLFSPKYGLLTRNKKAVENV.

A run of 8 helical transmembrane segments spans residues 17–37, 63–83, 93–113, 140–160, 164–184, 186–206, 223–243, and 245–265; these read AMILSTAVGGICAFLSSYLML, LPYALGAFFAGILAALSILWI, AVIGFIFSTFFALGLLIVSLN, IIIGVCLVLLLLFWKDLLLIF, TQAITVGLSPLFYKILFFTLL, ACVVAALQTVGAILVIAMVVT, IIAIILGAVTSFVGVYISYYL, and GATGGVIVTLQTLLFLVAFLF.

Belongs to the ABC-3 integral membrane protein family.

It is found in the cell inner membrane. In terms of biological role, part of an ATP-driven transport system HI_0359/HI_0360/HI_0361/HI_0362 for iron. This is Probable iron transport system membrane protein HI_0360 from Haemophilus influenzae (strain ATCC 51907 / DSM 11121 / KW20 / Rd).